A 146-amino-acid chain; its full sequence is Protein disulfide-isomerase 5-1 (146 aa).

The first 25 residues, 1–25, serve as a signal peptide directing secretion; that stretch reads MTLGARLVAPMIILLLFIPIELVKA. One can recognise a Thioredoxin domain in the interval 26-133; the sequence is EVITLTPETF…LKAFVVEETE (108 aa). Catalysis depends on nucleophile residues Cys-55 and Cys-58. Cys-55 and Cys-58 are disulfide-bonded.

Belongs to the protein disulfide isomerase family.

Acts as a protein-folding catalyst that interacts with nascent polypeptides to catalyze the formation, isomerization, and reduction or oxidation of disulfide bonds. The sequence is that of Protein disulfide-isomerase 5-1 (PDIL5-1) from Arabidopsis thaliana (Mouse-ear cress).